The chain runs to 387 residues: Dual specificity mitogen-activated protein kinase kinase mek-2 (387 aa).

The segment at 1–37 (MSSGKRRNPLGLSLPPTVNEQSESGEATAEEATATVP) is disordered. Residues 16-25 (PTVNEQSESG) show a composition bias toward polar residues. Residues 26–35 (EATAEEATAT) are compositionally biased toward low complexity. Residues 73–360 (LQTEGELGHG…LKSLTADVFF (288 aa)) form the Protein kinase domain. ATP-binding positions include 79-87 (LGHGNGGVV) and lysine 102. Catalysis depends on aspartate 195, which acts as the Proton acceptor. Residues serine 223 and serine 227 each carry the phosphoserine modification.

The protein belongs to the protein kinase superfamily. STE Ser/Thr protein kinase family. MAP kinase kinase subfamily. Interacts with ksr-1.

The enzyme catalyses L-seryl-[protein] + ATP = O-phospho-L-seryl-[protein] + ADP + H(+). It catalyses the reaction L-threonyl-[protein] + ATP = O-phospho-L-threonyl-[protein] + ADP + H(+). The catalysed reaction is L-tyrosyl-[protein] + ATP = O-phospho-L-tyrosyl-[protein] + ADP + H(+). Activated by tyrosine and threonine phosphorylation catalyzed by MAP kinase kinase kinases. Its function is as follows. Functions in the let-60 Ras signaling pathway; acts downstream of lin-45 raf kinase, but before the sur-1/mpk-1 gene product in controlling vulval cell differentiation. Required for progression of developing oocytes through the pachytene stage. Plays a role in responses to M.nematophilum-mediated bacterial infection by promoting tail swelling and preventing constipation. Involved in fluid homeostasis. Positively regulates lifespan upstream of mpk-1. The sequence is that of Dual specificity mitogen-activated protein kinase kinase mek-2 (mek-2) from Caenorhabditis elegans.